The primary structure comprises 104 residues: Ribonuclease P protein component 4 (104 aa).

Residues cysteine 57, cysteine 60, cysteine 83, and cysteine 86 each contribute to the Zn(2+) site.

It belongs to the eukaryotic/archaeal RNase P protein component 4 family. In terms of assembly, consists of a catalytic RNA component and at least 4-5 protein subunits. Requires Zn(2+) as cofactor.

Its subcellular location is the cytoplasm. It carries out the reaction Endonucleolytic cleavage of RNA, removing 5'-extranucleotides from tRNA precursor.. Its function is as follows. Part of ribonuclease P, a protein complex that generates mature tRNA molecules by cleaving their 5'-ends. The chain is Ribonuclease P protein component 4 from Saccharolobus islandicus (strain M.14.25 / Kamchatka #1) (Sulfolobus islandicus).